Reading from the N-terminus, the 448-residue chain is Exodeoxyribonuclease 7 large subunit (448 aa).

The protein belongs to the XseA family. As to quaternary structure, heterooligomer composed of large and small subunits.

The protein resides in the cytoplasm. The enzyme catalyses Exonucleolytic cleavage in either 5'- to 3'- or 3'- to 5'-direction to yield nucleoside 5'-phosphates.. Functionally, bidirectionally degrades single-stranded DNA into large acid-insoluble oligonucleotides, which are then degraded further into small acid-soluble oligonucleotides. The protein is Exodeoxyribonuclease 7 large subunit of Shewanella baltica (strain OS185).